The sequence spans 384 residues: Erythronate-4-phosphate dehydrogenase (384 aa).

Serine 45 and threonine 66 together coordinate substrate. Positions 147 and 177 each coordinate NAD(+). The active site involves arginine 210. An NAD(+)-binding site is contributed by aspartate 234. The active site involves glutamate 239. Histidine 256 (proton donor) is an active-site residue. Glycine 259 is an NAD(+) binding site. Tyrosine 260 serves as a coordination point for substrate.

Belongs to the D-isomer specific 2-hydroxyacid dehydrogenase family. PdxB subfamily. In terms of assembly, homodimer.

The protein localises to the cytoplasm. It carries out the reaction 4-phospho-D-erythronate + NAD(+) = (R)-3-hydroxy-2-oxo-4-phosphooxybutanoate + NADH + H(+). Its pathway is cofactor biosynthesis; pyridoxine 5'-phosphate biosynthesis; pyridoxine 5'-phosphate from D-erythrose 4-phosphate: step 2/5. Catalyzes the oxidation of erythronate-4-phosphate to 3-hydroxy-2-oxo-4-phosphonooxybutanoate. The protein is Erythronate-4-phosphate dehydrogenase of Marinobacter nauticus (strain ATCC 700491 / DSM 11845 / VT8) (Marinobacter aquaeolei).